We begin with the raw amino-acid sequence, 370 residues long: Lysophosphatidic acid receptor 4 (370 aa).

The Extracellular portion of the chain corresponds to 1-43; that stretch reads MGDRRFIDFQFQDSNSSLRPRLGNATANNTCIVDDSFKYNLNG. Residues asparagine 15, asparagine 24, and asparagine 28 are each glycosylated (N-linked (GlcNAc...) asparagine). A helical transmembrane segment spans residues 44–64; that stretch reads AVYSVVFILGLITNSVSLFVF. Over 65-73 the chain is Cytoplasmic; it reads CFRMKMRSE. Residues 74-94 traverse the membrane as a helical segment; that stretch reads TAIFITNLAVSDLLFVCTLPF. The Extracellular portion of the chain corresponds to 95–112; sequence KIFYNFNRHWPFGDTLCK. Residues cysteine 111 and cysteine 188 are joined by a disulfide bond. A helical transmembrane segment spans residues 113–133; the sequence is ISGTAFLTNIYGSMLFLTCIS. Over 134–155 the chain is Cytoplasmic; sequence VDRFLAIVYPFRSRTIRTRRNS. A helical membrane pass occupies residues 156–176; sequence AIVCAGVWILVLSGGISASLF. Over 177–203 the chain is Extracellular; the sequence is STTNVNNATTTCFEGFSKRVWKTYLSK. Asparagine 183 carries an N-linked (GlcNAc...) asparagine glycan. The chain crosses the membrane as a helical span at residues 204–224; it reads ITIFIEVVGFIIPLILNVSCS. Topologically, residues 225–254 are cytoplasmic; sequence SVVLRTLRKPATLSQIGTNKKKVLKMITVH. A helical transmembrane segment spans residues 255–275; sequence MAVFVVCFVPYNSVLFLYALV. The Extracellular portion of the chain corresponds to 276–294; the sequence is RSQAITNCFLERFAKIMYP. A helical membrane pass occupies residues 295-315; that stretch reads ITLCLATLNCCFDPFIYYFTL. At 316–370 the chain is on the cytoplasmic side; sequence ESFQKSFYINAHIRMESLFKTETPLTTKPSLPAIQEEVSDQTTNNGGELMLESTF.

This sequence belongs to the G-protein coupled receptor 1 family. As to expression, high expression in ovary. Not detected in the brain regions thalamus, putamen, caudate, frontal cortex, pons, hypothalamus and hippocampus.

The protein resides in the cell membrane. In terms of biological role, receptor for lysophosphatidic acid (LPA), a mediator of diverse cellular activities. Transduces a signal by increasing the intracellular calcium ions and by stimulating adenylyl cyclase activity. The rank order of potency for agonists of this receptor is 1-oleoyl- &gt; 1-stearoyl- &gt; 1-palmitoyl- &gt; 1-myristoyl- &gt; 1-alkyl- &gt; 1-alkenyl-LPA. This is Lysophosphatidic acid receptor 4 (LPAR4) from Homo sapiens (Human).